Consider the following 340-residue polypeptide: tRNA N6-adenosine threonylcarbamoyltransferase (340 aa).

Fe cation is bound by residues histidine 113 and histidine 117. Substrate-binding positions include 135–139, aspartate 169, glycine 182, aspartate 186, and asparagine 274; that span reads LVSGG. Aspartate 302 contributes to the Fe cation binding site.

The protein belongs to the KAE1 / TsaD family. Requires Fe(2+) as cofactor.

It localises to the cytoplasm. The enzyme catalyses L-threonylcarbamoyladenylate + adenosine(37) in tRNA = N(6)-L-threonylcarbamoyladenosine(37) in tRNA + AMP + H(+). In terms of biological role, required for the formation of a threonylcarbamoyl group on adenosine at position 37 (t(6)A37) in tRNAs that read codons beginning with adenine. Is involved in the transfer of the threonylcarbamoyl moiety of threonylcarbamoyl-AMP (TC-AMP) to the N6 group of A37, together with TsaE and TsaB. TsaD likely plays a direct catalytic role in this reaction. The polypeptide is tRNA N6-adenosine threonylcarbamoyltransferase (Mycolicibacterium gilvum (strain PYR-GCK) (Mycobacterium gilvum (strain PYR-GCK))).